The chain runs to 138 residues: Secreted RxLR effector protein 51 (138 aa).

Positions 1-19 are cleaved as a signal peptide; the sequence is MRSSTILFVLGVAMVAVNG. Positions 38 to 53 match the RxLR-dEER motif; sequence RLLRSNSGKHKTDEER. Asparagine 101 carries an N-linked (GlcNAc...) asparagine glycan.

Belongs to the RxLR effector family.

Its subcellular location is the secreted. It localises to the host nucleus. In terms of biological role, secreted effector that completely suppresses the host cell death induced by cell death-inducing proteins. The polypeptide is Secreted RxLR effector protein 51 (Plasmopara viticola (Downy mildew of grapevine)).